The sequence spans 416 residues: Gamma-glutamyl phosphate reductase (416 aa).

The protein belongs to the gamma-glutamyl phosphate reductase family.

The protein resides in the cytoplasm. It catalyses the reaction L-glutamate 5-semialdehyde + phosphate + NADP(+) = L-glutamyl 5-phosphate + NADPH + H(+). It participates in amino-acid biosynthesis; L-proline biosynthesis; L-glutamate 5-semialdehyde from L-glutamate: step 2/2. Catalyzes the NADPH-dependent reduction of L-glutamate 5-phosphate into L-glutamate 5-semialdehyde and phosphate. The product spontaneously undergoes cyclization to form 1-pyrroline-5-carboxylate. The sequence is that of Gamma-glutamyl phosphate reductase from Salmonella newport (strain SL254).